The sequence spans 395 residues: Proteinase-activated receptor 4 (395 aa).

Positions 1–16 (MCWPLLYPLMLGFSIS) are cleaved as a signal peptide. A propeptide spans 17-58 (PAECQTPSIYDDVESTREGQEASLRPTVELNESKSPDKPNPR) (removed for receptor activation). Residues 46–66 (LNESKSPDKPNPRGFPGKPCA) form a disordered region. Basic and acidic residues predominate over residues 47–56 (NESKSPDKPN). Residues 59–93 (GFPGKPCANNSDTLELPASSEALLLGWVPTRLVPA) lie on the Extracellular side of the membrane. The N-linked (GlcNAc...) asparagine glycan is linked to Asn67. Residues 94 to 114 (IYGLVVVVGLPANGLALWVLA) traverse the membrane as a helical segment. Over 115-119 (TRVPR) the chain is Cytoplasmic. A helical transmembrane segment spans residues 120-140 (LPSTILLMNLAVADLLLALVL). Residues 141 to 161 (PPRLVYHLRGQRWPFGEAACR) lie on the Extracellular side of the membrane. Residues Cys160 and Cys239 are joined by a disulfide bond. The helical transmembrane segment at 162–182 (VATAALYGHMYGSVLLLAAVS) threads the bilayer. Residues 183-203 (LDRYLALVHSLRARALRGQRL) are Cytoplasmic-facing. Residues 204 to 224 (TTILCLVAWLSAATLVLPLTF) form a helical membrane-spanning segment. Over 225 to 254 (HRQTFLLAGSDRMLCHDALPLAEQTSHWRP) the chain is Extracellular. The chain crosses the membrane as a helical span at residues 255–275 (AFICLAVLGCFVPLLAMVLCY). Over 276-295 (GATLRALAANGQRYSHAVRL) the chain is Cytoplasmic. A helical membrane pass occupies residues 296–316 (TALVLFSAVAAFTPSNVLLVL). The Extracellular segment spans residues 317–330 (HYSNPSPEAWGNLY). The helical transmembrane segment at 331–354 (GAYVPSLALSTLNSCVDPFIYYYV) threads the bilayer. The Cytoplasmic segment spans residues 355-395 (SHEFREKVRAMLCRQLKASSSSQASREAGSRGTAICSSTLL).

Belongs to the G-protein coupled receptor 1 family. In terms of processing, a proteolytic cleavage generates a new N-terminus that functions as a tethered ligand.

It is found in the cell membrane. Receptor for activated thrombin or trypsin coupled to G proteins that stimulate phosphoinositide hydrolysis. May play a role in platelets activation. The protein is Proteinase-activated receptor 4 (F2rl3) of Rattus norvegicus (Rat).